The primary structure comprises 128 residues: Iron-sulfur cluster insertion protein ErpA (128 aa).

Residues C56, C120, and C122 each coordinate iron-sulfur cluster.

Belongs to the HesB/IscA family. Homodimer. The cofactor is iron-sulfur cluster.

In terms of biological role, required for insertion of 4Fe-4S clusters for at least IspG. This Xylella fastidiosa (strain M12) protein is Iron-sulfur cluster insertion protein ErpA.